The sequence spans 242 residues: Small ribosomal subunit protein eS1 (242 aa).

The protein belongs to the eukaryotic ribosomal protein eS1 family. Component of the small ribosomal subunit. Mature ribosomes consist of a small (40S) and a large (60S) subunit. The 40S subunit contains about 33 different proteins and 1 molecule of RNA (18S). The 60S subunit contains about 49 different proteins and 3 molecules of RNA (25S, 5.8S and 5S).

Its subcellular location is the cytoplasm. The polypeptide is Small ribosomal subunit protein eS1 (Lodderomyces elongisporus (strain ATCC 11503 / CBS 2605 / JCM 1781 / NBRC 1676 / NRRL YB-4239) (Yeast)).